Reading from the N-terminus, the 904-residue chain is Protein translocase subunit SecA (904 aa).

ATP-binding positions include glutamine 89, 107-111 (GEGKT), and aspartate 496. The tract at residues 870 to 904 (GGFQELSSGTPSPTVTVTTSSGGGTERKTSRRRKR) is disordered. Residues 876 to 889 (SSGTPSPTVTVTTS) show a composition bias toward low complexity.

It belongs to the SecA family. Monomer and homodimer. Part of the essential Sec protein translocation apparatus which comprises SecA, SecYEG and auxiliary proteins SecDF. Other proteins may also be involved.

It localises to the cell inner membrane. Its subcellular location is the cytoplasm. It catalyses the reaction ATP + H2O + cellular proteinSide 1 = ADP + phosphate + cellular proteinSide 2.. Functionally, part of the Sec protein translocase complex. Interacts with the SecYEG preprotein conducting channel. Has a central role in coupling the hydrolysis of ATP to the transfer of proteins into and across the cell membrane, serving as an ATP-driven molecular motor driving the stepwise translocation of polypeptide chains across the membrane. The polypeptide is Protein translocase subunit SecA (Leptospira borgpetersenii serovar Hardjo-bovis (strain L550)).